A 269-amino-acid chain; its full sequence is 3-methyl-2-oxobutanoate hydroxymethyltransferase (269 aa).

2 residues coordinate Mg(2+): Asp-43 and Asp-82. 3-methyl-2-oxobutanoate is bound by residues Asp-43–Ser-44, Asp-82, and Lys-110. Glu-112 provides a ligand contact to Mg(2+). Glu-179 serves as the catalytic Proton acceptor.

This sequence belongs to the PanB family. Homodecamer; pentamer of dimers. Requires Mg(2+) as cofactor.

It is found in the cytoplasm. It carries out the reaction 3-methyl-2-oxobutanoate + (6R)-5,10-methylene-5,6,7,8-tetrahydrofolate + H2O = 2-dehydropantoate + (6S)-5,6,7,8-tetrahydrofolate. It functions in the pathway cofactor biosynthesis; (R)-pantothenate biosynthesis; (R)-pantoate from 3-methyl-2-oxobutanoate: step 1/2. Functionally, catalyzes the reversible reaction in which hydroxymethyl group from 5,10-methylenetetrahydrofolate is transferred onto alpha-ketoisovalerate to form ketopantoate. The sequence is that of 3-methyl-2-oxobutanoate hydroxymethyltransferase from Acinetobacter baumannii (strain SDF).